The primary structure comprises 278 residues: Aquaporin NIP3-3 (278 aa).

A run of 2 helical transmembrane segments spans residues 70–90 (VSAE…TIIM) and 99–119 (TLLG…LSLI). The NPA 1 motif lies at 127–129 (NPA). 3 consecutive transmembrane segments (helical) span residues 141–163 (PSAH…SFAV), 185–205 (AFFV…ALAT), and 213–233 (LIAV…GPST). Positions 238–240 (NPA) match the NPA 2 motif. Residues 255-275 (IWVYLVATPLGAIAGTGAYVA) form a helical membrane-spanning segment.

This sequence belongs to the MIP/aquaporin (TC 1.A.8) family. NIP (TC 1.A.8.12) subfamily. As to expression, expressed in leaves and at lower levels in roots and anthers.

It is found in the membrane. Its function is as follows. Aquaporins facilitate the transport of water and small neutral solutes across cell membranes. The polypeptide is Aquaporin NIP3-3 (NIP3-3) (Oryza sativa subsp. japonica (Rice)).